The following is a 734-amino-acid chain: Photosystem I P700 chlorophyll a apoprotein A2 (734 aa).

Transmembrane regions (helical) follow at residues isoleucine 46–alanine 69, leucine 135–glutamine 158, leucine 175–isoleucine 199, methionine 273–tyrosine 291, leucine 330–tyrosine 353, alanine 369–isoleucine 395, alanine 417–histidine 439, and phenylalanine 517–valine 535. [4Fe-4S] cluster is bound by residues cysteine 559 and cysteine 568. 2 helical membrane-spanning segments follow: residues alanine 575–tryptophan 596 and leucine 643–isoleucine 665. Residues histidine 654, methionine 662, and tyrosine 670 each contribute to the chlorophyll a site. A phylloquinone-binding site is contributed by tryptophan 671. A helical membrane pass occupies residues leucine 707–alanine 727.

This sequence belongs to the PsaA/PsaB family. The PsaA/B heterodimer binds the P700 chlorophyll special pair and subsequent electron acceptors. PSI consists of a core antenna complex that captures photons, and an electron transfer chain that converts photonic excitation into a charge separation. The eukaryotic PSI reaction center is composed of at least 11 subunits. The cofactor is P700 is a chlorophyll a/chlorophyll a' dimer, A0 is one or more chlorophyll a, A1 is one or both phylloquinones and FX is a shared 4Fe-4S iron-sulfur center..

Its subcellular location is the plastid. It is found in the chloroplast thylakoid membrane. The enzyme catalyses reduced [plastocyanin] + hnu + oxidized [2Fe-2S]-[ferredoxin] = oxidized [plastocyanin] + reduced [2Fe-2S]-[ferredoxin]. In terms of biological role, psaA and PsaB bind P700, the primary electron donor of photosystem I (PSI), as well as the electron acceptors A0, A1 and FX. PSI is a plastocyanin-ferredoxin oxidoreductase, converting photonic excitation into a charge separation, which transfers an electron from the donor P700 chlorophyll pair to the spectroscopically characterized acceptors A0, A1, FX, FA and FB in turn. Oxidized P700 is reduced on the lumenal side of the thylakoid membrane by plastocyanin. The protein is Photosystem I P700 chlorophyll a apoprotein A2 of Solanum tuberosum (Potato).